The primary structure comprises 1575 residues: Ovochymase (1575 aa).

Residues 1–19 (MIVTFVALALSCCTPQVTA) form the signal peptide. The Peptidase S1 1 domain occupies 36 to 280 (IVGGEMAKLG…YSSWIANYTQ (245 aa)). The cysteines at positions 61 and 77 are disulfide-linked. Catalysis depends on charge relay system residues His-76 and Asp-132. Disulfide bonds link Cys-166–Cys-233, Cys-199–Cys-212, and Cys-223–Cys-256. The Charge relay system role is filled by Ser-227. 2 N-linked (GlcNAc...) asparagine glycosylation sites follow: Asn-277 and Asn-303. 4 cysteine pairs are disulfide-bonded: Cys-300–Cys-330, Cys-358–Cys-386, Cys-432–Cys-460, and Cys-486–Cys-507. 2 consecutive CUB domains span residues 300–423 (CSSN…FHAV) and 432–545 (CGGI…YYFS). N-linked (GlcNAc...) asparagine glycosylation is found at Asn-497, Asn-513, and Asn-549. Positions 575–810 (IVNGDIAIAG…YIDWIIATAN (236 aa)) constitute a Peptidase S1 2 domain. The cysteines at positions 602 and 618 are disulfide-linked. Residues His-617 and Asp-665 each act as charge relay system in the active site. Disulfide bonds link Cys-700–Cys-766, Cys-730–Cys-745, and Cys-756–Cys-786. Residue Asn-748 is glycosylated (N-linked (GlcNAc...) asparagine). Catalysis depends on Ser-760, which acts as the Charge relay system. N-linked (GlcNAc...) asparagine glycosylation is present at Asn-810. Cystine bridges form between Cys-830–Cys-859, Cys-889–Cys-913, Cys-956–Cys-984, Cys-1012–Cys-1034, Cys-1080–Cys-1108, Cys-1135–Cys-1158, and Cys-1221–Cys-1246. CUB domains are found at residues 830–949 (CIQL…YRLE), 956–1070 (CGQL…FVEL), 1080–1197 (CGGV…YTAV), and 1221–1341 (CQDS…YKLM). N-linked (GlcNAc...) asparagine glycans are attached at residues Asn-968, Asn-1027, Asn-1087, and Asn-1090. Residue Asn-1273 is glycosylated (N-linked (GlcNAc...) asparagine). One can recognise a Peptidase S1 3 domain in the interval 1314 to 1575 (YNGGEISMLF…FLKWITKIIQ (262 aa)). 2 disulfides stabilise this stretch: Cys-1376–Cys-1392 and Cys-1493–Cys-1507. The N-linked (GlcNAc...) asparagine glycan is linked to Asn-1511.

This sequence belongs to the peptidase S1 family. As to expression, expressed in the testis and ovary. Expressed in the gonads and gametes. Expressed in the follicle cells covering the vitelline coat of ovarian egg.

Its subcellular location is the secreted. Functionally, may be responsible for elevation of the vitelline coat at the late developmental stage of oogenesis and during fertilization in ovarian eggs. The protein is Ovochymase of Halocynthia roretzi (Sea squirt).